The primary structure comprises 251 residues: Hydroxyacylglutathione hydrolase (251 aa).

The Zn(2+) site is built by His53, His55, Asp57, His58, His110, Asp127, and His165.

The protein belongs to the metallo-beta-lactamase superfamily. Glyoxalase II family. As to quaternary structure, monomer. The cofactor is Zn(2+).

It carries out the reaction an S-(2-hydroxyacyl)glutathione + H2O = a 2-hydroxy carboxylate + glutathione + H(+). The protein operates within secondary metabolite metabolism; methylglyoxal degradation; (R)-lactate from methylglyoxal: step 2/2. Thiolesterase that catalyzes the hydrolysis of S-D-lactoyl-glutathione to form glutathione and D-lactic acid. This chain is Hydroxyacylglutathione hydrolase, found in Erwinia tasmaniensis (strain DSM 17950 / CFBP 7177 / CIP 109463 / NCPPB 4357 / Et1/99).